The primary structure comprises 108 residues: Protein RnfH (108 aa).

The segment at A86 to A108 is disordered.

The protein belongs to the UPF0125 (RnfH) family.

In Pseudoalteromonas atlantica (strain T6c / ATCC BAA-1087), this protein is Protein RnfH.